The following is a 638-amino-acid chain: Zinc finger protein 143 (638 aa).

N-acetylmethionine is present on Met1. Residue Lys213 forms a Glycyl lysine isopeptide (Lys-Gly) (interchain with G-Cter in SUMO2) linkage. 4 C2H2-type zinc fingers span residues 237–261, 267–291, 297–321, and 327–351; these read FRCK…ERSH, YQCE…FRTH, YRCS…IRTH, and FKCP…IRTH. Residue Thr352 is modified to Phosphothreonine. 3 C2H2-type zinc fingers span residues 357 to 381, 387 to 411, and 417 to 440; these read YYCT…VRIH, YVCT…HVVH, and YNCN…RTAH. Residue Lys406 forms a Glycyl lysine isopeptide (Lys-Gly) (interchain with G-Cter in SUMO2) linkage.

This sequence belongs to the GLI C2H2-type zinc-finger protein family. As to quaternary structure, interacts with CHD8. Forms a complex with HCFC1 and ZNF143.

The protein resides in the nucleus. Functionally, transcriptional activator. In complex with HCFC1 and ZNF143, regulates the expression of several genes, including AP2S1, ESCO2, OPHN1, RBL1, UBXN8 and ZNF32. Activates the gene for selenocysteine tRNA (tRNAsec). Binds to the SPH motif of small nuclear RNA (snRNA) gene promoters. Participates in efficient U6 RNA polymerase III transcription via its interaction with CHD8. This Rattus norvegicus (Rat) protein is Zinc finger protein 143 (Znf143).